The sequence spans 150 residues: Galectin-1 (150 aa).

The Galectin domain maps to 9–141; sequence NQIKLQDDFK…FSSPVTVDIH (133 aa). 4 residues coordinate a carbohydrate: His51, Arg55, Asn64, and Glu75.

Homotetramer. Oligomerization is required for carbohydrate binding. In terms of tissue distribution, most abundant in fruiting bodies. Very low levels of expression in asexual vegetative mycelia.

It localises to the secreted. Its subcellular location is the extracellular space. The protein resides in the extracellular matrix. The protein localises to the cell wall. It is found in the endomembrane system. Its function is as follows. Binds lactose. May play a role in fruiting body formation. This is Galectin-1 (Cgl1) from Coprinopsis cinerea (strain Okayama-7 / 130 / ATCC MYA-4618 / FGSC 9003) (Inky cap fungus).